Reading from the N-terminus, the 277-residue chain is Probable CCR4-associated factor 1 homolog 10 (277 aa).

4 residues coordinate a divalent metal cation: aspartate 40, glutamate 42, aspartate 166, and aspartate 235.

This sequence belongs to the CAF1 family. As to quaternary structure, component of the CCR4-NOT complex, at least composed of CRR4 and CAF1 proteins. Requires a divalent metal cation as cofactor.

It is found in the nucleus. The protein localises to the cytoplasm. It catalyses the reaction Exonucleolytic cleavage of poly(A) to 5'-AMP.. Its function is as follows. Ubiquitous transcription factor required for a diverse set of processes. It is a component of the CCR4 complex involved in the control of gene expression. The protein is Probable CCR4-associated factor 1 homolog 10 (CAF1-10) of Arabidopsis thaliana (Mouse-ear cress).